A 594-amino-acid chain; its full sequence is uncharacterized protein (594 aa).

Its function is as follows. The presence of the two linear plasmids, termed pGKL1 and pGKL2, in strains of Kluyveromyces lactis confers the killer phenotype to the host cell, by promoting the secretion of a toxin able to inhibit the growth of sensitive strains. This is an uncharacterized protein from Kluyveromyces lactis (strain ATCC 8585 / CBS 2359 / DSM 70799 / NBRC 1267 / NRRL Y-1140 / WM37) (Yeast).